The following is a 501-amino-acid chain: MELELDLSFFYKTTILPECVLIFCLISILILDLILKIKDKNVFFFISLVSLLLSIFILIFQLKEEPVISFLGNFQADNFNKIFRIFIALCSILCIPLSIDFIKCTKLAITEFLIFLLTATIGGMFLCGANDLITIFVSLECLSLCSYLLSGYTKKDVRSNEAVMKYLLIGGTSSSILAYGFSWLYGLSGGEFQLQKIADGLVSTEMYNSFGSLLALVFIIVGIGFKLSLVPFHQWTPDVYEGSPTPVVAFLSVASKIAGLALLVRLFNIVFPFLPNQWHSLLEISAICSMILGNLVAITQTSMKRMLAYSSISQIGYLMIGLVTGNFDGYTSMIVYLLFYIFMNLGTFACIILFGLRTGTDNIRDYSGLILKDPLLTFSLALCLLSLGGIPPLSGFFGKLYLFWCAWKTGLYFLVFIGLFTSVISIYYYLKIIKLLITTENKEVTSYVQSYTVSSFSLLSKNSIEVSIIICVIASIFLGIFMNPIINILQINLHLNTFTNI.

14 consecutive transmembrane segments (helical) span residues 15–35, 42–62, 82–102, 107–127, 132–152, 167–187, 210–230, 244–264, 278–298, 307–327, 334–354, 378–398, 410–430, and 466–486; these read ILPE…DLIL, VFFF…IFQL, IFRI…IDFI, LAIT…MFLC, LITI…LSGY, LLIG…LYGL, FGSL…LSLV, PTPV…ALLV, WHSL…LVAI, LAYS…TGNF, IVYL…IILF, FSLA…GFFG, GLYF…YYYL, and VSII…NPII.

This sequence belongs to the complex I subunit 2 family. In terms of assembly, NDH is composed of at least 16 different subunits, 5 of which are encoded in the nucleus.

The protein localises to the plastid. The protein resides in the chloroplast thylakoid membrane. It catalyses the reaction a plastoquinone + NADH + (n+1) H(+)(in) = a plastoquinol + NAD(+) + n H(+)(out). It carries out the reaction a plastoquinone + NADPH + (n+1) H(+)(in) = a plastoquinol + NADP(+) + n H(+)(out). In terms of biological role, NDH shuttles electrons from NAD(P)H:plastoquinone, via FMN and iron-sulfur (Fe-S) centers, to quinones in the photosynthetic chain and possibly in a chloroplast respiratory chain. The immediate electron acceptor for the enzyme in this species is believed to be plastoquinone. Couples the redox reaction to proton translocation, and thus conserves the redox energy in a proton gradient. This Physcomitrium patens (Spreading-leaved earth moss) protein is NAD(P)H-quinone oxidoreductase subunit 2, chloroplastic.